The sequence spans 601 residues: Terpinolene synthase, chloroplastic (601 aa).

The N-terminal 32 residues, 1–32 (MSTFVISNSMHVGISFSFLHKLPQTPPPQVVC), are a transit peptide targeting the chloroplast. Asp354, Asp358, Asp498, Thr502, and Glu506 together coordinate Mg(2+). Positions 354–358 (DDVYD) match the DDXXD motif motif.

Belongs to the terpene synthase family. Tpsd subfamily. The cofactor is Mg(2+). Mn(2+) serves as cofactor.

The protein localises to the plastid. It localises to the chloroplast. It carries out the reaction (2E)-geranyl diphosphate = terpinolene + diphosphate. The protein operates within secondary metabolite biosynthesis; terpenoid biosynthesis. In terms of biological role, monoterpene synthase that catalyzes the formation of terpinolene and other monoterpenes from geranyl diphosphate. The protein is Terpinolene synthase, chloroplastic (TES) of Ocimum basilicum (Sweet basil).